Consider the following 462-residue polypeptide: DIMBOA UDP-glucosyltransferase BX9 (462 aa).

Residue His-24 is the Proton acceptor of the active site. His-24 is an an anthocyanidin binding site. The Charge relay role is filled by Asp-115. Residues Thr-137, Ala-336, Gln-338, His-353, Trp-356, Asn-357, Ser-358, and Glu-361 each contribute to the UDP-alpha-D-glucose site. Gly-376 serves as a coordination point for an anthocyanidin. Residues Asp-377 and Gln-378 each contribute to the UDP-alpha-D-glucose site.

Belongs to the UDP-glycosyltransferase family. It depends on Mg(2+) as a cofactor. The cofactor is Ca(2+). Expressed at the same levels in roots and shoots.

It carries out the reaction DIMBOA + UDP-alpha-D-glucose = DIMBOA beta-D-glucoside + UDP + H(+). The catalysed reaction is DIBOA + UDP-alpha-D-glucose = DIBOA beta-D-glucoside + UDP + H(+). Glucosyltransferase involved in the last step of benzoxazinoid glucoside biosynthesis. Catalyzes the glucosylation of hydroxamic acids utilizing UDP-glucose as glucose doner, reducing the toxicity of these natural insecticides for storage. Can use DIMBOA and DIBOA as substrates, HMBOA (2-hydroxy-7-methoxy-2H-1,4-benzoxazin-3(4H)-one) and HBOA (2-hydroxy-2H-1,4-benzoxazin-3(4H)-one) with a lower efficiency, but not indole acetic acid or quercitin. This Zea mays (Maize) protein is DIMBOA UDP-glucosyltransferase BX9 (BX9).